Here is a 355-residue protein sequence, read N- to C-terminus: MKIVADENLAFTDYFFSEFGDIQHKAGRTLTHTDVQDAEALLVRSVTAVNESLIQNTALKYVGSATIGTDHLDIQALEKQGITWANAAGCNAQAVAEYVITALLHLDASLLEQQEKFTLGIVGLGNVGKRLAYMAQLLGWKVIGFDPFVQLDSIENVSFQTLLQQANAVSIHVPLTKKGEHATYHLFDEKAFAALQPNTILINSARGPVVKEAALIEDIQCTQRKVVLDVFEHEPVISEGLLNMLALATPHIAGYSLEGKARGTQMIYEAFCQKFGYDINKRFETQLPACEDYFSGHDLKAVLKQKLSQIYDIAQYDANIRACVKEGKVEQKAFDLLRKNYPLRREWAAHGGPQA.

Ser45 and Thr66 together coordinate substrate. Position 146 (Asp146) interacts with NAD(+). The active site involves Arg206. Asp229 serves as a coordination point for NAD(+). Glu234 is a catalytic residue. The Proton donor role is filled by His251. Residue Gly254 coordinates NAD(+). Tyr255 is a binding site for substrate.

It belongs to the D-isomer specific 2-hydroxyacid dehydrogenase family. PdxB subfamily. As to quaternary structure, homodimer.

Its subcellular location is the cytoplasm. The catalysed reaction is 4-phospho-D-erythronate + NAD(+) = (R)-3-hydroxy-2-oxo-4-phosphooxybutanoate + NADH + H(+). Its pathway is cofactor biosynthesis; pyridoxine 5'-phosphate biosynthesis; pyridoxine 5'-phosphate from D-erythrose 4-phosphate: step 2/5. Catalyzes the oxidation of erythronate-4-phosphate to 3-hydroxy-2-oxo-4-phosphonooxybutanoate. This is Erythronate-4-phosphate dehydrogenase from Acinetobacter baumannii (strain SDF).